A 119-amino-acid polypeptide reads, in one-letter code: Small ribosomal subunit protein bS16 (119 aa).

Belongs to the bacterial ribosomal protein bS16 family.

In Chlamydia abortus (strain DSM 27085 / S26/3) (Chlamydophila abortus), this protein is Small ribosomal subunit protein bS16.